The primary structure comprises 265 residues: 4-hydroxy-tetrahydrodipicolinate reductase (265 aa).

NAD(+) contacts are provided by residues 7-12 and Asp33; that span reads GASGRM. Position 34 (Arg34) interacts with NADP(+). NAD(+) contacts are provided by residues 96-98 and 120-123; these read GTT and AANM. Catalysis depends on His153, which acts as the Proton donor/acceptor. His154 serves as a coordination point for (S)-2,3,4,5-tetrahydrodipicolinate. The active-site Proton donor is Lys157. 163 to 164 serves as a coordination point for (S)-2,3,4,5-tetrahydrodipicolinate; that stretch reads GT.

The protein belongs to the DapB family.

It localises to the cytoplasm. The catalysed reaction is (S)-2,3,4,5-tetrahydrodipicolinate + NAD(+) + H2O = (2S,4S)-4-hydroxy-2,3,4,5-tetrahydrodipicolinate + NADH + H(+). It catalyses the reaction (S)-2,3,4,5-tetrahydrodipicolinate + NADP(+) + H2O = (2S,4S)-4-hydroxy-2,3,4,5-tetrahydrodipicolinate + NADPH + H(+). It functions in the pathway amino-acid biosynthesis; L-lysine biosynthesis via DAP pathway; (S)-tetrahydrodipicolinate from L-aspartate: step 4/4. In terms of biological role, catalyzes the conversion of 4-hydroxy-tetrahydrodipicolinate (HTPA) to tetrahydrodipicolinate. The polypeptide is 4-hydroxy-tetrahydrodipicolinate reductase (Burkholderia multivorans (strain ATCC 17616 / 249)).